The following is a 406-amino-acid chain: Acetylornithine/succinyldiaminopimelate aminotransferase (406 aa).

Residues 108–109 (GT) and Phe141 each bind pyridoxal 5'-phosphate. Arg144 serves as a coordination point for N(2)-acetyl-L-ornithine. Position 226–229 (226–229 (DEVQ)) interacts with pyridoxal 5'-phosphate. Position 255 is an N6-(pyridoxal phosphate)lysine (Lys255). N(2)-acetyl-L-ornithine is bound at residue Ser283. Thr284 is a binding site for pyridoxal 5'-phosphate.

Belongs to the class-III pyridoxal-phosphate-dependent aminotransferase family. ArgD subfamily. In terms of assembly, homodimer. The cofactor is pyridoxal 5'-phosphate.

It localises to the cytoplasm. The enzyme catalyses N(2)-acetyl-L-ornithine + 2-oxoglutarate = N-acetyl-L-glutamate 5-semialdehyde + L-glutamate. It catalyses the reaction N-succinyl-(2S,6S)-2,6-diaminopimelate + 2-oxoglutarate = (S)-2-succinylamino-6-oxoheptanedioate + L-glutamate. It participates in amino-acid biosynthesis; L-arginine biosynthesis; N(2)-acetyl-L-ornithine from L-glutamate: step 4/4. The protein operates within amino-acid biosynthesis; L-lysine biosynthesis via DAP pathway; LL-2,6-diaminopimelate from (S)-tetrahydrodipicolinate (succinylase route): step 2/3. Involved in both the arginine and lysine biosynthetic pathways. In Escherichia coli O157:H7, this protein is Acetylornithine/succinyldiaminopimelate aminotransferase.